Here is a 190-residue protein sequence, read N- to C-terminus: Glutathione peroxidase 2 (190 aa).

The active site involves Sec-40. Position 40 (Sec-40) is a non-standard amino acid, selenocysteine.

The protein belongs to the glutathione peroxidase family. In terms of assembly, homotetramer.

The protein resides in the cytoplasm. Its subcellular location is the cytosol. It carries out the reaction 2 glutathione + H2O2 = glutathione disulfide + 2 H2O. The enzyme catalyses a hydroperoxy polyunsaturated fatty acid + 2 glutathione = a hydroxy polyunsaturated fatty acid + glutathione disulfide + H2O. The catalysed reaction is tert-butyl hydroperoxide + 2 glutathione = tert-butanol + glutathione disulfide + H2O. It catalyses the reaction cumene hydroperoxide + 2 glutathione = 2-phenylpropan-2-ol + glutathione disulfide + H2O. It carries out the reaction (13S)-hydroperoxy-(9Z,11E)-octadecadienoate + 2 glutathione = (13S)-hydroxy-(9Z,11E)-octadecadienoate + glutathione disulfide + H2O. The enzyme catalyses (5S)-hydroperoxy-(6E,8Z,11Z,14Z)-eicosatetraenoate + 2 glutathione = (5S)-hydroxy-(6E,8Z,11Z,14Z)-eicosatetraenoate + glutathione disulfide + H2O. The catalysed reaction is (12R)-hydroperoxy-(5Z,8Z,10E,14Z)-eicosatetraenoate + 2 glutathione = (12R)-hydroxy-(5Z,8Z,10E,14Z)-eicosatetraenoate + glutathione disulfide + H2O. It catalyses the reaction (15S)-hydroperoxy-(5Z,8Z,11Z,13E)-eicosatetraenoate + 2 glutathione = (15S)-hydroxy-(5Z,8Z,11Z,13E)-eicosatetraenoate + glutathione disulfide + H2O. Catalyzes the reduction of hydroperoxides in a glutathione-dependent manner thus regulating cellular redox homeostasis. Can reduce small soluble hydroperoxides such as H2O2, cumene hydroperoxide and tert-butyl hydroperoxide, as well as several fatty acid-derived hydroperoxides. Cannot reduce phosphatidycholine hydroperoxide. This Callithrix jacchus (White-tufted-ear marmoset) protein is Glutathione peroxidase 2 (GPX2).